The following is a 735-amino-acid chain: Diacylglycerol kinase alpha (735 aa).

EF-hand domains are found at residues 110 to 145 (RPEDKLEFTFKLYDTDRNGILDSSEVDKIILQMMRV) and 155 to 190 (ELRPILQEMMKEIDYDGSGSVSQAEWVRAGATTVPL). Residues D123, D125, N127, E134, D168, D170, S172, S174, and E179 each contribute to the Ca(2+) site. 2 consecutive Phorbol-ester/DAG-type zinc fingers follow at residues 205–253 (QHMW…ALPC) and 269–319 (SHVW…GHEC). A DAGKc domain is found at 372 to 506 (PNTHPLLVFV…MDRWSVEVIP (135 aa)). K484 is modified (N6-acetyllysine).

The protein belongs to the eukaryotic diacylglycerol kinase family. As to quaternary structure, monomer. As to expression, expressed in lymphocytes.

It is found in the cytoplasm. Its subcellular location is the cytosol. The enzyme catalyses a 1,2-diacyl-sn-glycerol + ATP = a 1,2-diacyl-sn-glycero-3-phosphate + ADP + H(+). The catalysed reaction is a 1-O-alkyl-sn-glycerol + ATP = a 1-O-alkyl-sn-glycero-3-phosphate + ADP + H(+). It carries out the reaction 1-O-alkyl-2-acyl-sn-glycerol + ATP = 1-O-alkyl-2-acyl-sn-glycero-3-phosphate + ADP + H(+). It catalyses the reaction 1,2-dihexadecanoyl-sn-glycerol + ATP = 1,2-dihexadecanoyl-sn-glycero-3-phosphate + ADP + H(+). The enzyme catalyses 1-hexadecanoyl-2-(9Z-octadecenoyl)-sn-glycerol + ATP = 1-hexadecanoyl-2-(9Z-octadecenoyl)-sn-glycero-3-phosphate + ADP + H(+). The catalysed reaction is 2-(9Z-octadecenoyl)-glycerol + ATP = 2-(9Z-octadecenoyl)-sn-glycero-3-phosphate + ADP + H(+). It carries out the reaction 1,2-di-(9Z-octadecenoyl)-sn-glycerol + ATP = 1,2-di-(9Z-octadecenoyl)-sn-glycero-3-phosphate + ADP + H(+). It catalyses the reaction 1-octadecanoyl-2-(5Z,8Z,11Z,14Z-eicosatetraenoyl)-sn-glycerol + ATP = 1-octadecanoyl-2-(5Z,8Z,11Z,14Z-eicosatetraenoyl)-sn-glycero-3-phosphate + ADP + H(+). The enzyme catalyses 1,2-didecanoyl-sn-glycerol + ATP = 1,2-didecanoyl-sn-glycero-3-phosphate + ADP + H(+). The catalysed reaction is 1-O-hexadecyl-2-acetyl-sn-glycerol + ATP = 1-O-hexadecyl-2-acetyl-sn-glycero-3-phosphate + ADP + H(+). It carries out the reaction 1-O-hexadecyl-2-(5Z,8Z,11Z,14Z-eicosatetraenoyl)-sn-glycerol + ATP = 1-O-hexadecyl-2-(5Z,8Z,11Z,14Z-eicosatetraenoyl)-sn-glycero-3-phosphate + ADP + H(+). It catalyses the reaction 1-O-hexadecyl-2-(9Z-octadecenoyl)-sn-glycerol + ATP = 1-O-hexadecyl-2-(9Z-octadecenoyl)-sn-glycero-3-phosphate + ADP + H(+). The enzyme catalyses 1-O-hexadecyl-sn-glycerol + ATP = 1-O-hexadecyl-sn-glycero-3-phosphate + ADP + H(+). It participates in lipid metabolism; glycerolipid metabolism. Its activity is regulated as follows. Stimulated by calcium and phosphatidylserine. Diacylglycerol kinase that converts diacylglycerol/DAG into phosphatidic acid/phosphatidate/PA and regulates the respective levels of these two bioactive lipids. Thereby, acts as a central switch between the signaling pathways activated by these second messengers with different cellular targets and opposite effects in numerous biological processes. Also plays an important role in the biosynthesis of complex lipids. Can also phosphorylate 1-alkyl-2-acylglycerol in vitro as efficiently as diacylglycerol provided it contains an arachidonoyl group. Also involved in the production of alkyl-lysophosphatidic acid, another bioactive lipid, through the phosphorylation of 1-alkyl-2-acetyl glycerol. The polypeptide is Diacylglycerol kinase alpha (DGKA) (Homo sapiens (Human)).